We begin with the raw amino-acid sequence, 566 residues long: Probable F-box protein At5g39490 (566 aa).

The F-box domain maps to 8-54 (ACLLLMLPEDIFVVISRFLSPSDICNLILCGKSLRALVDSEKTWLVQ). Positions 318 to 338 (LRKSSSSKNTTPSQSEIRHSN) are disordered. The span at 320-332 (KSSSSKNTTPSQS) shows a compositional bias: low complexity.

This is Probable F-box protein At5g39490 from Arabidopsis thaliana (Mouse-ear cress).